Reading from the N-terminus, the 54-residue chain is MARNELRPVIKLRSTAGTGFTYVTRKNRRNDPDRMTLRKYDPIARRHVDFREER.

It belongs to the bacterial ribosomal protein bL33 family.

The protein is Large ribosomal subunit protein bL33A of Streptomyces avermitilis (strain ATCC 31267 / DSM 46492 / JCM 5070 / NBRC 14893 / NCIMB 12804 / NRRL 8165 / MA-4680).